Consider the following 169-residue polypeptide: Phosphopantetheine adenylyltransferase (169 aa).

Thr-14 contacts substrate. ATP is bound by residues 14–15 (TF) and His-22. Substrate-binding residues include Lys-46, Leu-78, and Arg-92. ATP contacts are provided by residues 93–95 (GLR), Glu-103, and 128–134 (HSFISSS).

Belongs to the bacterial CoaD family. As to quaternary structure, homohexamer. Mg(2+) serves as cofactor.

Its subcellular location is the cytoplasm. It catalyses the reaction (R)-4'-phosphopantetheine + ATP + H(+) = 3'-dephospho-CoA + diphosphate. It functions in the pathway cofactor biosynthesis; coenzyme A biosynthesis; CoA from (R)-pantothenate: step 4/5. Functionally, reversibly transfers an adenylyl group from ATP to 4'-phosphopantetheine, yielding dephospho-CoA (dPCoA) and pyrophosphate. This chain is Phosphopantetheine adenylyltransferase, found in Stenotrophomonas maltophilia (strain K279a).